The sequence spans 478 residues: Deoxyribodipyrimidine photo-lyase (478 aa).

One can recognise a Photolyase/cryptochrome alpha/beta domain in the interval 2–136 (NVNLMWFRND…IINCFHDSVL (135 aa)). Glu-110 contacts (6R)-5,10-methylene-5,6,7,8-tetrahydrofolate. Residues Tyr-227 and 239–243 (TSMLS) contribute to the FAD site. Interaction with DNA stretches follow at residues 279 to 286 (ELLWREFY) and 346 to 347 (NR). 377-379 (DGD) is an FAD binding site. Gln-409 provides a ligand contact to DNA.

The protein belongs to the DNA photolyase class-1 family. As to quaternary structure, monomer. FAD is required as a cofactor. (6R)-5,10-methylene-5,6,7,8-tetrahydrofolate serves as cofactor.

It carries out the reaction cyclobutadipyrimidine (in DNA) = 2 pyrimidine residues (in DNA).. Its function is as follows. Involved in repair of UV radiation-induced DNA damage. Catalyzes the light-dependent monomerization (300-600 nm) of cyclobutyl pyrimidine dimers (in cis-syn configuration), which are formed between adjacent bases on the same DNA strand upon exposure to ultraviolet radiation. The protein is Deoxyribodipyrimidine photo-lyase (phrB) of Buchnera aphidicola subsp. Baizongia pistaciae (strain Bp).